The primary structure comprises 349 residues: uncharacterized protein (349 aa).

This is an uncharacterized protein from Escherichia coli (strain K12).